Reading from the N-terminus, the 318-residue chain is Na(+)-translocating ferredoxin:NAD(+) oxidoreductase complex subunit D (318 aa).

Transmembrane regions (helical) follow at residues 35–55 (LAVAGYVFGLWALALVAICVI), 77–99 (WSAVVTGVLLAFNLPINAPWWIG), and 114–134 (FGGLGQNFINPALAARAFLLA). T156 bears the FMN phosphoryl threonine mark. The next 3 helical transmembrane spans lie at 182-202 (VYGCIGEISALALLIGGLYLI), 206-226 (IISWRIPTIYLLTIAIFALLV), and 261-281 (IIYAIGCGLITMIIRLYGGYP).

The protein belongs to the NqrB/RnfD family. In terms of assembly, the complex is composed of six subunits: RnfA, RnfB, RnfC, RnfD, RnfE and RnfG. FMN serves as cofactor.

It is found in the cell membrane. The catalysed reaction is 2 reduced [2Fe-2S]-[ferredoxin] + Na(+)(in) + NAD(+) + H(+) = 2 oxidized [2Fe-2S]-[ferredoxin] + Na(+)(out) + NADH. Functionally, part of a membrane-bound complex that couples electron transfer with translocation of ions across the membrane. Couples electron transfer from reduced ferredoxin to NAD(+) with electrogenic movement of Na(+) out of the cell. Involved in caffeate respiration. This chain is Na(+)-translocating ferredoxin:NAD(+) oxidoreductase complex subunit D, found in Acetobacterium woodii (strain ATCC 29683 / DSM 1030 / JCM 2381 / KCTC 1655 / WB1).